We begin with the raw amino-acid sequence, 166 residues long: Putative 4-hydroxy-4-methyl-2-oxoglutarate aldolase 2 (166 aa).

A2 is modified (N-acetylalanine). Substrate-binding positions include 81–84 (GGNP) and R103. D104 contributes to the a divalent metal cation binding site.

This sequence belongs to the class II aldolase/RraA-like family. As to quaternary structure, homotrimer. A divalent metal cation serves as cofactor.

The catalysed reaction is 4-hydroxy-4-methyl-2-oxoglutarate = 2 pyruvate. It carries out the reaction oxaloacetate + H(+) = pyruvate + CO2. Catalyzes the aldol cleavage of 4-hydroxy-4-methyl-2-oxoglutarate (HMG) into 2 molecules of pyruvate. Also contains a secondary oxaloacetate (OAA) decarboxylase activity due to the common pyruvate enolate transition state formed following C-C bond cleavage in the retro-aldol and decarboxylation reactions. In Arabidopsis thaliana (Mouse-ear cress), this protein is Putative 4-hydroxy-4-methyl-2-oxoglutarate aldolase 2.